The following is a 154-amino-acid chain: Ribosomal RNA large subunit methyltransferase H (154 aa).

S-adenosyl-L-methionine is bound by residues Leu70, Gly102, and 121–126 (LSRMTL).

This sequence belongs to the RNA methyltransferase RlmH family. As to quaternary structure, homodimer.

The protein resides in the cytoplasm. It carries out the reaction pseudouridine(1915) in 23S rRNA + S-adenosyl-L-methionine = N(3)-methylpseudouridine(1915) in 23S rRNA + S-adenosyl-L-homocysteine + H(+). Its function is as follows. Specifically methylates the pseudouridine at position 1915 (m3Psi1915) in 23S rRNA. This is Ribosomal RNA large subunit methyltransferase H from Geobacter sp. (strain M21).